Reading from the N-terminus, the 712-residue chain is MFDTHTVEIEWAGRPLKLETGKIARQADGAVLATYGETVVLATVVSAKAPKPGQDFFPLTVNYQEKTYAAGKIPGGYFKREGRPSENETLVSRLIDRPIRPLFPEGYKNDTQVVVTVVQHDLENNPDILSMIASSAALTLSGVPFMGPVGGARVGYINGEYVLNPHLDEMDESSLDLVVAGTYDAVLMVESEAKELPEDVMLGAVMFGHKGFQPVLDAIIKLAEVAAKEPRDFQPEDYSELEGEMLKHFEAELREAYKITQKADRYAAVDAVKAKVKAHFLPEEGEAKYTAEEVGAIFKHLQAKIVRWNILDTKSRIDGRDLETVRPIVSEVGLLPRTHGSALFTRGETQAIVVATLGTGEDEQYVDSLTGMYKERFLLHYNFPPFSVGETGRMGSPGRREIGHGKLAWRAIRPMLPSAEQFPYTLRVVSEITESNGSSSMATVCGTSLALMDAGVPLAKPVAGIAMGLILEGDRFAVLSDILGDEDHLGDMDFKVAGTADGITSLQMDIKIAGITEEIMKVALGQAKGGRAHILGEMAKAITESRGQLGEFAPRIEVMNIPVDKIREVIGSGGKVIREIVEKTGAKINIEDDGTVKIASSSGKEIEAARKWIHSIVAEPEIGQIYEGTVVKTADFGAFVNFFGARDGLVHISQLASERVAKTTDVVKEGDKVWVKLLGFDERGKVRLSMKVVDQATGQEIPNEKKKEEAAE.

Mg(2+) is bound by residues Asp-487 and Asp-493. The KH domain occupies Pro-554–Ile-613. One can recognise an S1 motif domain in the interval Gly-623–Lys-691.

Belongs to the polyribonucleotide nucleotidyltransferase family. Mg(2+) serves as cofactor.

It is found in the cytoplasm. It catalyses the reaction RNA(n+1) + phosphate = RNA(n) + a ribonucleoside 5'-diphosphate. Involved in mRNA degradation. Catalyzes the phosphorolysis of single-stranded polyribonucleotides processively in the 3'- to 5'-direction. The sequence is that of Polyribonucleotide nucleotidyltransferase from Rhizobium etli (strain ATCC 51251 / DSM 11541 / JCM 21823 / NBRC 15573 / CFN 42).